We begin with the raw amino-acid sequence, 509 residues long: O-acetyltransferase anaAT (509 aa).

This sequence belongs to the fumigaclavine B O-acetyltransferase family. As to quaternary structure, monomer.

The catalysed reaction is (2R,3S,11R)-aszonalenin + acetyl-CoA = (2R,3S,11R)-acetylaszonalenin + CoA. It functions in the pathway alkaloid biosynthesis. In terms of biological role, O-acetyltransferase; part of the gene cluster that mediates the biosynthesis of the prenylated pyrroloindoline diketopiperazine acetylaszonalenin. The first step in the pathway is the formation of (R)-benzodiazepinedione by condensation of tryptophan and anthranilic acid catalyzed by the non-ribosomal peptide synthetase anaPS. The prenyltransferase anaPT then converts (R)-benzodiazepinedione to aszonalenin in the presence of dimethylallyl diphosphate (DMAPP) via C3-prenylation. The last step in the biosynthesis of acetylaszonalenin via acetylation of aszonalenin at position N1 catalyzed by anaAT. The chain is O-acetyltransferase anaAT from Neosartorya fischeri (strain ATCC 1020 / DSM 3700 / CBS 544.65 / FGSC A1164 / JCM 1740 / NRRL 181 / WB 181) (Aspergillus fischerianus).